Reading from the N-terminus, the 432-residue chain is Alcohol acyltransferase 9 (432 aa).

Catalysis depends on proton acceptor residues His156 and Asp379.

Belongs to the plant acyltransferase family. Expressed in fruit.

It catalyses the reaction 2-(methylsulfanyl)acetyl-CoA + butan-1-ol = butyl 2-(methylsulfanyl)acetate + CoA. It carries out the reaction ethanol + acetyl-CoA = ethyl acetate + CoA. The enzyme catalyses butan-1-ol + acetyl-CoA = butyl acetate + CoA. The catalysed reaction is butan-1-ol + propanoyl-CoA = butyl propanoate + CoA. In terms of biological role, involved in the biosynthesis of volatile esters which confer kiwifruit flavor. Alcohol acyl transferase that can use a wide range of alcohols as substrate to produce esters. Exhibits acetyl-CoA:alcohol O-acyltransferase activity. This is Alcohol acyltransferase 9 from Actinidia deliciosa (Kiwi).